Reading from the N-terminus, the 451-residue chain is KNR4/SMI1 homolog 1 (451 aa).

Positions 410–422 are enriched in polar residues; it reads ENQIAGGSDNAKN. Positions 410-451 are disordered; sequence ENQIAGGSDNAKNQVKLGETSDTKQDDTSKIASTVSTSDEDE. Residues 428–438 show a composition bias toward basic and acidic residues; sequence ETSDTKQDDTS. Positions 439–451 are enriched in polar residues; that stretch reads KIASTVSTSDEDE.

The protein belongs to the KNR4/SMI1 family.

The protein is KNR4/SMI1 homolog 1 of Debaryomyces hansenii (strain ATCC 36239 / CBS 767 / BCRC 21394 / JCM 1990 / NBRC 0083 / IGC 2968) (Yeast).